Here is a 630-residue protein sequence, read N- to C-terminus: tRNA uridine 5-carboxymethylaminomethyl modification enzyme MnmG (630 aa).

Residue 13 to 18 (GGGHAG) coordinates FAD. Residue 273–287 (GPRYCPSIEDKIHRF) participates in NAD(+) binding.

Belongs to the MnmG family. Homodimer. Heterotetramer of two MnmE and two MnmG subunits. Requires FAD as cofactor.

It localises to the cytoplasm. Functionally, NAD-binding protein involved in the addition of a carboxymethylaminomethyl (cmnm) group at the wobble position (U34) of certain tRNAs, forming tRNA-cmnm(5)s(2)U34. This is tRNA uridine 5-carboxymethylaminomethyl modification enzyme MnmG from Pseudomonas entomophila (strain L48).